The primary structure comprises 143 residues: Transcriptional regulator MraZ (143 aa).

SpoVT-AbrB domains lie at 5-47 (SHAP…PMAE) and 76-119 (AADD…DAQR).

This sequence belongs to the MraZ family. In terms of assembly, forms oligomers.

It localises to the cytoplasm. The protein resides in the nucleoid. The polypeptide is Transcriptional regulator MraZ (Frankia casuarinae (strain DSM 45818 / CECT 9043 / HFP020203 / CcI3)).